Reading from the N-terminus, the 510-residue chain is Crotonobetaine/carnitine--CoA ligase (510 aa).

Belongs to the ATP-dependent AMP-binding enzyme family.

The enzyme catalyses 4-(trimethylamino)butanoate + ATP + CoA = 4-(trimethylamino)butanoyl-CoA + AMP + diphosphate. It carries out the reaction crotonobetaine + ATP + CoA = crotonobetainyl-CoA + AMP + diphosphate. The catalysed reaction is (R)-carnitine + ATP + CoA = (R)-carnitinyl-CoA + AMP + diphosphate. It participates in amine and polyamine metabolism; carnitine metabolism. Its function is as follows. Catalyzes the transfer of CoA to carnitine, generating the initial carnitinyl-CoA needed for the CaiB reaction cycle. Also has activity toward crotonobetaine and gamma-butyrobetaine. This chain is Crotonobetaine/carnitine--CoA ligase, found in Shigella flexneri serotype 5b (strain 8401).